The following is a 110-amino-acid chain: UPF0122 protein Aflv_1766 (110 aa).

Belongs to the UPF0122 family.

Might take part in the signal recognition particle (SRP) pathway. This is inferred from the conservation of its genetic proximity to ftsY/ffh. May be a regulatory protein. The sequence is that of UPF0122 protein Aflv_1766 from Anoxybacillus flavithermus (strain DSM 21510 / WK1).